The primary structure comprises 82 residues: Conotoxin Gla-TxX (82 aa).

An N-terminal signal peptide occupies residues 1 to 25 (MSGHTSVSFLLLSIVALGMVATVIC). Glu30, Glu34, Glu37, Glu40, and Glu41 each carry 4-carboxyglutamate. Asn72 is subject to Asparagine amide. A propeptide spanning residues 77-82 (LIHMQK) is cleaved from the precursor.

Post-translationally, contains 4 disulfide bonds. Expressed by the venom duct.

It is found in the secreted. This is Conotoxin Gla-TxX from Conus textile (Cloth-of-gold cone).